A 571-amino-acid polypeptide reads, in one-letter code: Membrane protein insertase YidC (571 aa).

The chain crosses the membrane as a helical span at residues 4–24 (TRVFLIFAWLMVAVLLWMEWS). The segment at 29–78 (APTPAPTTTSAPAAAQSVPGANPGAIPSAQVPGAPGQAAAQAQASATPAS) is disordered. Low complexity-rich tracts occupy residues 34–43 (PTTTSAPAAA) and 55–78 (PSAQ…TPAS). Transmembrane regions (helical) follow at residues 369-389 (LVGN…LVLY), 440-460 (GGCL…WVLV), 483-503 (YFIL…LTPA), and 518-538 (PLVF…YWVV).

This sequence belongs to the OXA1/ALB3/YidC family. Type 1 subfamily. In terms of assembly, interacts with the Sec translocase complex via SecD. Specifically interacts with transmembrane segments of nascent integral membrane proteins during membrane integration.

It localises to the cell inner membrane. Its function is as follows. Required for the insertion and/or proper folding and/or complex formation of integral membrane proteins into the membrane. Involved in integration of membrane proteins that insert both dependently and independently of the Sec translocase complex, as well as at least some lipoproteins. Aids folding of multispanning membrane proteins. This is Membrane protein insertase YidC from Stenotrophomonas maltophilia (strain K279a).